The chain runs to 853 residues: MSEKVDWLQSQNGVCKVDVYSPGDNQAQDWKMDTSTDPVRVLSWLRRDLEKSTAEFQDVRFKPGESFGGETSNSGDPHKGFSVDYYNTTTKGTPERLHFEMTHKEIPCQGPRAQLGNGSSVDEVSFYANRLTNLVIAMARKEINEKIDGSENKCVYQSLYMGNEPTPTKSLSKIASELVNETVSACSRNAAPDKAPGSGDRVSGSSQSPPNLKYKSTLKIKESTKERQGPDDKPPSKKSFFYKEVFESRNGDYAREGGRFFPRERKRFRGQERPDDFTASVSEGIMTYANSVVSDMMVSIMKTLKIQVKDTTIATILLKKVLLKHAKEVVSDLIDSFLRNLHSVTGTLMTDTQFVSAVKRTVFSHGSQKATDIMDAMLRKLYNVMFAKKVPEHVRKAQDKAESYSLISMKGMGDPKNRNVNFAMKSETKLREKMYSEPKSEEETCAKTLGEHIIKEGLTLWHKTQQKECKSLGFQHAAFEAPNTQRKPASDISFEYPEDIGNLSLPPYPPEKPENFMYDSDSWAEDLIVSALLLIQYHLAQGGRRDARSFVEAAGTTNFPANEPPVAPDESCLKSAPIVGDQEQAEKKDLRSVFFNFIRNLLSETIFKRDQSPEPKVPEQPVKEDRKLCERPLASSPPRLYEDDETPGALSGLTKMAVSQIDGHMSGQMVEHLMNSVMKLCVIIAKSCDASLAELGDDKSGDASRLTSAFPDSLYECLPAKGTGSAEAVLQNAYQAIHNEMRGTSGQPPEGCAAPTVIVSNHNLTDTVQNKQLQAVLQWVAASELNVPILYFAGDDEGIQEKLLQLSAAAVDKGCSVGEVLQSVLRYEKERQLNEAVGNVTPLQLLDWLMVNL.

The segment at 124–137 (VSFYANRLTNLVIA) is PKA-RII subunit binding domain. The tract at residues 188–240 (RNAAPDKAPGSGDRVSGSSQSPPNLKYKSTLKIKESTKERQGPDDKPPSKKSF) is disordered. Residues Ser205 and Ser208 each carry the phosphoserine modification. Residues 219 to 235 (KIKESTKERQGPDDKPP) are compositionally biased toward basic and acidic residues. The residue at position 403 (Ser403) is a Phosphoserine. Phosphotyrosine is present on Tyr404. Phosphoserine is present on residues Ser635 and Ser636.

The protein belongs to the AKAP110 family. In terms of assembly, interacts with ROPN1 and ROPN1L. Interacts with QRICH2. Post-translationally, phosphorylated by STK33 during sperm flagella assembly. Phosphorylated on tyrosine residues. Testis specific; only expressed in spermatids.

It is found in the cytoplasmic vesicle. The protein localises to the secretory vesicle. Its subcellular location is the acrosome. The protein resides in the cell projection. It localises to the cilium. It is found in the flagellum. Its function is as follows. Structural component of sperm fibrous sheath. Required for the formation of the subcellular structure of the sperm flagellum, sperm motility and male fertility. The protein is A-kinase anchor protein 3 of Homo sapiens (Human).